The chain runs to 88 residues: Translation initiation factor IF-1 1 (88 aa).

One can recognise an S1-like domain in the interval 1–72 (MSKEDMIELE…TKGRINFRHP (72 aa)). The tract at residues 66 to 88 (RINFRHPTANPGAGPRPSHHHRR) is disordered.

It belongs to the IF-1 family. In terms of assembly, component of the 30S ribosomal translation pre-initiation complex which assembles on the 30S ribosome in the order IF-2 and IF-3, IF-1 and N-formylmethionyl-tRNA(fMet); mRNA recruitment can occur at any time during PIC assembly.

It is found in the cytoplasm. One of the essential components for the initiation of protein synthesis. Stabilizes the binding of IF-2 and IF-3 on the 30S subunit to which N-formylmethionyl-tRNA(fMet) subsequently binds. Helps modulate mRNA selection, yielding the 30S pre-initiation complex (PIC). Upon addition of the 50S ribosomal subunit IF-1, IF-2 and IF-3 are released leaving the mature 70S translation initiation complex. The chain is Translation initiation factor IF-1 1 from Chromobacterium violaceum (strain ATCC 12472 / DSM 30191 / JCM 1249 / CCUG 213 / NBRC 12614 / NCIMB 9131 / NCTC 9757 / MK).